Reading from the N-terminus, the 330-residue chain is Delta-aminolevulinic acid dehydratase (330 aa).

Residues cysteine 122, cysteine 124, histidine 131, and cysteine 132 each coordinate Zn(2+). Lysine 199 functions as the Schiff-base intermediate with substrate in the catalytic mechanism. Lysine 199 carries the post-translational modification N6-succinyllysine. Arginine 209 lines the 5-aminolevulinate pocket. Position 215 is a phosphoserine (serine 215). Position 221 (arginine 221) interacts with 5-aminolevulinate. Cysteine 223 is a binding site for Zn(2+). The active-site Schiff-base intermediate with substrate is the lysine 252. An N6-succinyllysine modification is found at lysine 252. Serine 279 and tyrosine 318 together coordinate 5-aminolevulinate.

The protein belongs to the ALAD family. In terms of assembly, homooctamer; active form. Homohexamer; low activity form. Zn(2+) serves as cofactor.

Its subcellular location is the cytoplasm. It localises to the cytosol. The catalysed reaction is 2 5-aminolevulinate = porphobilinogen + 2 H2O + H(+). Its pathway is porphyrin-containing compound metabolism; protoporphyrin-IX biosynthesis; coproporphyrinogen-III from 5-aminolevulinate: step 1/4. Can alternate between a fully active homooctamer and a low-activity homohexamer. A bound magnesium ion may promote the assembly of the fully active homooctamer. The magnesium-binding site is absent in the low-activity homohexamer. Inhibited by compounds that favor the hexameric state. Inhibited by divalent lead ions. The lead ions partially displace the zinc cofactor. Its function is as follows. Catalyzes an early step in the biosynthesis of tetrapyrroles. Binds two molecules of 5-aminolevulinate per subunit, each at a distinct site, and catalyzes their condensation to form porphobilinogen. The chain is Delta-aminolevulinic acid dehydratase (ALAD) from Macaca fascicularis (Crab-eating macaque).